A 631-amino-acid chain; its full sequence is Phosphomethylpyrimidine synthase (631 aa).

Residues Asn-239, Met-268, Tyr-297, His-333, 353–355 (SRG), 394–397 (DGLR), and Glu-433 each bind substrate. His-437 contributes to the Zn(2+) binding site. A substrate-binding site is contributed by Tyr-460. His-501 is a binding site for Zn(2+). The [4Fe-4S] cluster site is built by Cys-581, Cys-584, and Cys-589.

This sequence belongs to the ThiC family. In terms of assembly, homodimer. It depends on [4Fe-4S] cluster as a cofactor.

It catalyses the reaction 5-amino-1-(5-phospho-beta-D-ribosyl)imidazole + S-adenosyl-L-methionine = 4-amino-2-methyl-5-(phosphooxymethyl)pyrimidine + CO + 5'-deoxyadenosine + formate + L-methionine + 3 H(+). It participates in cofactor biosynthesis; thiamine diphosphate biosynthesis. Functionally, catalyzes the synthesis of the hydroxymethylpyrimidine phosphate (HMP-P) moiety of thiamine from aminoimidazole ribotide (AIR) in a radical S-adenosyl-L-methionine (SAM)-dependent reaction. The polypeptide is Phosphomethylpyrimidine synthase (Escherichia coli O157:H7).